Reading from the N-terminus, the 596-residue chain is Elongation factor 4 (596 aa).

Residues 2-184 (RNIRNFSIIA…AIVHRIPPPK (183 aa)) form the tr-type G domain. GTP is bound by residues 14 to 19 (DHGKST) and 131 to 134 (NKID).

The protein belongs to the TRAFAC class translation factor GTPase superfamily. Classic translation factor GTPase family. LepA subfamily.

It localises to the cell inner membrane. The enzyme catalyses GTP + H2O = GDP + phosphate + H(+). Its function is as follows. Required for accurate and efficient protein synthesis under certain stress conditions. May act as a fidelity factor of the translation reaction, by catalyzing a one-codon backward translocation of tRNAs on improperly translocated ribosomes. Back-translocation proceeds from a post-translocation (POST) complex to a pre-translocation (PRE) complex, thus giving elongation factor G a second chance to translocate the tRNAs correctly. Binds to ribosomes in a GTP-dependent manner. This is Elongation factor 4 from Xanthomonas euvesicatoria pv. vesicatoria (strain 85-10) (Xanthomonas campestris pv. vesicatoria).